The primary structure comprises 425 residues: Polyribonucleotide 5'-hydroxyl-kinase Clp1 (425 aa).

ATP is bound by residues Glu22, Lys62, and 124–129 (DVGKST).

Belongs to the Clp1 family. Clp1 subfamily. Component of the tRNA splicing endonuclease complex. Component of pre-mRNA cleavage complex II (CF-II).

The protein resides in the nucleus. It catalyses the reaction a 5'-end dephospho-2'-deoxyribonucleoside-DNA + ATP = a 5'-end 5'-phospho-2'-deoxyribonucleoside-DNA + ADP + H(+). The catalysed reaction is a 5'-end dephospho-ribonucleoside-RNA + ATP = a 5'-end 5'-phospho-ribonucleoside-RNA + ADP + H(+). In terms of biological role, polynucleotide kinase that can phosphorylate the 5'-hydroxyl groups of double-stranded RNA (dsRNA), single-stranded RNA (ssRNA), double stranded DNA (dsDNA) and double-stranded DNA:RNA hybrids. dsRNA is phosphorylated more efficiently than dsDNA, and the RNA component of a DNA:RNA hybrid is phosphorylated more efficiently than the DNA component. Plays a role in both tRNA splicing and mRNA 3'-end formation. Component of the tRNA splicing endonuclease complex: phosphorylates the 5'-terminus of the tRNA 3'-exon during tRNA splicing; this phosphorylation event is a prerequisite for the subsequent ligation of the two exon halves and the production of a mature tRNA. Its role in tRNA splicing and maturation is required for cerebellar development. Component of the pre-mRNA cleavage complex II (CF-II), which seems to be required for mRNA 3'-end formation. Also phosphorylates the 5'-terminus of exogenously introduced short interfering RNAs (siRNAs), which is a necessary prerequisite for their incorporation into the RNA-induced silencing complex (RISC). However, endogenous siRNAs and microRNAs (miRNAs) that are produced by the cleavage of dsRNA precursors by dicer1 already contain a 5'-phosphate group, so this protein may be dispensible for normal RNA-mediated gene silencing. The chain is Polyribonucleotide 5'-hydroxyl-kinase Clp1 from Gallus gallus (Chicken).